A 574-amino-acid polypeptide reads, in one-letter code: Phosphate permease PHO89 (574 aa).

Over 1 to 5 the chain is Extracellular; sequence MALHQ. Residues 6–26 traverse the membrane as a helical segment; that stretch reads FDYIFAIAMLFAFLDAFNIGA. Residues 27 to 43 are Cytoplasmic-facing; sequence NDVANSFASSISSRSLK. Residues 44–64 traverse the membrane as a helical segment; the sequence is YWQAMVLAGLCEFLGAVLAGA. Residues 65–84 are Extracellular-facing; that stretch reads RVSGTIKNNIIDSSIFTNDP. Residues 85-105 form a helical membrane-spanning segment; that stretch reads AVLMLTMTSALIGSSCWLTFA. At 106–117 the chain is on the cytoplasmic side; the sequence is TAIGMPVSTTHS. The chain crosses the membrane as a helical span at residues 118–138; it reads IVGGTIGAGIAAGGANGVVWG. Residues 139–145 are Extracellular-facing; sequence WSGVSQI. Residues 146 to 166 form a helical membrane-spanning segment; the sequence is IASWFIAPILAGAIAAIVFSI. Topologically, residues 167-184 are cytoplasmic; it reads SRFSVLEVKSLERSIKNA. Residues 185-205 traverse the membrane as a helical segment; that stretch reads LLLVGVLVFATFSILTMLIVW. Residues 206–222 lie on the Extracellular side of the membrane; that stretch reads KGSPNLHLDDLSETETA. The chain crosses the membrane as a helical span at residues 223-243; sequence VSIVLTGAIASIVYFIFFYPF. Residues 244 to 354 are Cytoplasmic-facing; sequence YRRKVLDQDW…SLLKQGPKKW (111 aa). Residues 301-332 form a disordered region; the sequence is EDEENKAASNSNDSVKNKEDIQEVDLVRTETE. Residues 315–332 show a composition bias toward basic and acidic residues; that stretch reads VKNKEDIQEVDLVRTETE. Residues 355–375 form a helical membrane-spanning segment; it reads PLLFWLVISHGWTQDVIHAQV. Topologically, residues 376 to 398 are extracellular; it reads NDRDMLSGDLKGMYERSKFYDNR. The helical transmembrane segment at 399–419 threads the bilayer; sequence VEYIYSVLQAITAATMSFAHG. At 420 to 447 the chain is on the cytoplasmic side; the sequence is ANDVANATGPLSAVYVIWKTNTIGAKSE. Residues 448–468 form a helical membrane-spanning segment; sequence VPVWVLAYGGVALVIGCWTYG. At 469-503 the chain is on the extracellular side; that stretch reads YNIIKNLGNKMILQSPSRGFSIELAVAITTVMATQ. A helical membrane pass occupies residues 504–524; it reads LGIPTSTTQIAVGGIVAVGLC. The Cytoplasmic segment spans residues 525-541; the sequence is NKDLKSVNWRMVAWCYS. The chain crosses the membrane as a helical span at residues 542–562; the sequence is GWFLTLPIAGLIAGIINGIIL. The Extracellular portion of the chain corresponds to 563–574; sequence NAPRFGVEYQMT.

The protein belongs to the inorganic phosphate transporter (PiT) (TC 2.A.20) family. As to quaternary structure, forms homodimers and higher order homooligomers.

It localises to the cell membrane. The catalysed reaction is 2 Na(+)(out) + phosphate(out) = 2 Na(+)(in) + phosphate(in). Its activity is regulated as follows. Weakly stimulated by Li(+) and K(+). Inhibited by monensin. Inhibited by phosphonoacetic acid. Inhibited by methylphosphonate. Inhibited by dimethylphosphonate. In terms of biological role, sodium-phosphate symporter. Active in early growth phase. This Saccharomyces cerevisiae (strain ATCC 204508 / S288c) (Baker's yeast) protein is Phosphate permease PHO89 (PHO89).